Consider the following 250-residue polypeptide: Neurotrophic factor BDNF precursor form (250 aa).

Positions 1–18 are cleaved as a signal peptide; it reads MTILFLTMVISYFGCMKA. Positions 19–131 are excised as a propeptide; sequence APMKEANLRA…AANMSMRVRR (113 aa). Intrachain disulfides connect Cys-144/Cys-211, Cys-189/Cys-240, and Cys-199/Cys-242.

This sequence belongs to the NGF-beta family. Monomers and homodimers. Binds to NTRK2/TRKB. Can form heterodimers with other neurotrophin family members, such as NTF3 and NTF4 (in vitro), but the physiological relevance of this is not clear. BDNF precursor form: interacts with the heterodimer formed by NGFR and SORCS2. Mature BDNF has much lower affinity for the heterodimer formed by NGFR and SORCS2. In terms of processing, N-glycosylated and glycosulfated, contrary to mature BDNF. Mature BDNF is produced by proteolytic removal of the propeptide, catalyzed by a FURIN family member. In addition, the precursor form is proteolytically cleaved within the propeptide, but this is not an obligatory intermediate for the production of mature BDNF. Can be converted into mature BDNF by plasmin (PLG).

Its subcellular location is the secreted. Its function is as follows. Important signaling molecule that activates signaling cascades downstream of NTRK2. During development, promotes the survival and differentiation of selected neuronal populations of the peripheral and central nervous systems. Participates in axonal growth, pathfinding and in the modulation of dendritic growth and morphology. Major regulator of synaptic transmission and plasticity at adult synapses in many regions of the CNS. The versatility of BDNF is emphasized by its contribution to a range of adaptive neuronal responses including long-term potentiation (LTP), long-term depression (LTD), certain forms of short-term synaptic plasticity, as well as homeostatic regulation of intrinsic neuronal excitability. In terms of biological role, important signaling molecule that activates signaling cascades downstream of NTRK2. Activates signaling cascades via the heterodimeric receptor formed by NGFR and SORCS2. Signaling via NGFR and SORCS2 plays a role in synaptic plasticity and long-term depression (LTD). Binding to NGFR and SORCS2 promotes neuronal apoptosis. Promotes neuronal growth cone collapse. This chain is Neurotrophic factor BDNF precursor form (BDNF), found in Bos taurus (Bovine).